A 204-amino-acid polypeptide reads, in one-letter code: NAD(P)H dehydrogenase (quinone) (204 aa).

Residues 3-194 (VLIVFYSMYG…AGARYQGRHV (192 aa)) form the Flavodoxin-like domain. FMN contacts are provided by residues 9–14 (SMYGHI) and 82–84 (TRF). An NAD(+)-binding site is contributed by tyrosine 11. A substrate-binding site is contributed by tryptophan 102. Histidine 138 serves as a coordination point for FMN.

Belongs to the WrbA family. The cofactor is FMN.

The enzyme catalyses a quinone + NADH + H(+) = a quinol + NAD(+). The catalysed reaction is a quinone + NADPH + H(+) = a quinol + NADP(+). This chain is NAD(P)H dehydrogenase (quinone), found in Syntrophobacter fumaroxidans (strain DSM 10017 / MPOB).